The chain runs to 144 residues: Gastric inhibitory polypeptide (144 aa).

A signal peptide spans 1-21; it reads MVALKTCSLLLVLLFLAVGLG. Propeptides lie at residues 22–42 and 87–144; these read EKEE…PRGP and EARA…LRSQ. The interval 94-113 is disordered; the sequence is AGQSQGKEDKEAQESSLPKS.

Belongs to the glucagon family.

The protein localises to the secreted. Potent stimulator of insulin secretion and relatively poor inhibitor of gastric acid secretion. In Mus musculus (Mouse), this protein is Gastric inhibitory polypeptide (Gip).